The following is a 36-amino-acid chain: Photosystem I reaction center subunit VIII (36 aa).

A helical membrane pass occupies residues 9 to 29 (IFVPLVGLVFPAVAMASLFLY).

It belongs to the PsaI family.

It is found in the plastid. The protein localises to the chloroplast thylakoid membrane. May help in the organization of the PsaL subunit. The chain is Photosystem I reaction center subunit VIII from Ostreococcus tauri.